We begin with the raw amino-acid sequence, 140 residues long: Small ribosomal subunit protein uS11 (140 aa).

Positions 116-140 (GRVEDVTPIPHDGTRPKGGRRGRRV) are disordered.

Belongs to the universal ribosomal protein uS11 family. As to quaternary structure, part of the 30S ribosomal subunit.

Functionally, located on the platform of the 30S subunit. The polypeptide is Small ribosomal subunit protein uS11 (Thermococcus kodakarensis (strain ATCC BAA-918 / JCM 12380 / KOD1) (Pyrococcus kodakaraensis (strain KOD1))).